Here is a 353-residue protein sequence, read N- to C-terminus: 2-Hydroxyacid oxidase 2 (353 aa).

In terms of domain architecture, FMN hydroxy acid dehydrogenase spans 2 to 353 (PLVCLADFKA…SPDLIQFSRL (352 aa)). FMN contacts are provided by residues 77–79 (PTA), Ser106, and Gln128. Tyr130 is a binding site for a 2-oxocarboxylate. Ser133 carries the post-translational modification Phosphoserine. Thr156 serves as a coordination point for FMN. An a 2-oxocarboxylate-binding site is contributed by Arg165. Residue Lys224 participates in FMN binding. The Proton acceptor role is filled by His248. Arg251 is a binding site for a 2-oxocarboxylate. FMN is bound by residues 279-283 (DGGVR) and 302-303 (GR). The short motif at 351 to 353 (SRL) is the Microbody targeting signal element.

It belongs to the FMN-dependent alpha-hydroxy acid dehydrogenase family. As to quaternary structure, homotetramer. Could also form homooctamer. The cofactor is FMN. In terms of tissue distribution, expressed in kidney.

It is found in the peroxisome. It carries out the reaction a (2S)-2-hydroxycarboxylate + O2 = a 2-oxocarboxylate + H2O2. The enzyme catalyses 2-hydroxyoctanoate + O2 = 2-oxooctanoate + H2O2. It catalyses the reaction 2-hydroxyhexadecanoate + O2 = 2-oxohexadecanoate + H2O2. The catalysed reaction is 2-hydroxyhexanoate + O2 = 2-oxohexanoate + H2O2. It carries out the reaction mandelate + O2 = phenylglyoxylate + H2O2. Its activity is regulated as follows. Is inhibited in vitro by CCPST (4-carboxy-5-(4-chlorophenyl)sulfanyl-1,2,3-thiadiazole). Its function is as follows. Oxidase that catalyzes the oxidation of medium and long chain hydroxyacids such as 2-hydroxyhexadecanoate, 2-hydroxyoctanoate, 2-hydroxyhexanoate and 2-hydroxybutanoate, to the correspondong 2-oxoacids. Its role in the oxidation of 2-hydroxy fatty acids may contribute to the general pathway of fatty acid alpha-oxidation. Can also use mandelate as substrate. Active in vitro with the artificial electron acceptor 2,6-dichlorophenolindophenol (DCIP), but O2 is believed to be the physiological electron acceptor, leading to the production of H2O2. The protein is 2-Hydroxyacid oxidase 2 (Hao2) of Rattus norvegicus (Rat).